A 608-amino-acid chain; its full sequence is UvrABC system protein C (608 aa).

The region spanning 13-91 (HKPGVYIMHD…IKKNSPKYNI (79 aa)) is the GIY-YIG domain. In terms of domain architecture, UVR spans 202–237 (DELTKKLTDKMMAASKNLNFELAAKLRDSITNIQVI).

This sequence belongs to the UvrC family. As to quaternary structure, interacts with UvrB in an incision complex.

The protein resides in the cytoplasm. Its function is as follows. The UvrABC repair system catalyzes the recognition and processing of DNA lesions. UvrC both incises the 5' and 3' sides of the lesion. The N-terminal half is responsible for the 3' incision and the C-terminal half is responsible for the 5' incision. In Finegoldia magna (strain ATCC 29328 / DSM 20472 / WAL 2508) (Peptostreptococcus magnus), this protein is UvrABC system protein C.